The chain runs to 652 residues: Na(+)/H(+) antiporter NhaA 3 (652 aa).

The interval 1-428 is na(+)/H(+) antiporter NhaA; sequence MTGEIPRGRR…GASLTTWLVF (428 aa). Helical transmembrane passes span 32–52, 78–98, 114–134, 142–162, 173–193, 200–220, 227–249, 306–326, 342–362, 376–396, and 411–431; these read ETGS…WVNL, LRFW…GLEV, MLPL…YLAF, VGWG…LAVL, FLLT…AIAY, MALF…AAGV, LLLG…VVGL, HPWA…GVVV, GVLF…SMLV, WAAI…ALLI, and VGIL…FRLA. In terms of domain architecture, Thioredoxin spans 429-623; the sequence is RLAARLAPAR…LSAAVMSAFA (195 aa). The disordered stretch occupies residues 626-652; that stretch reads RLRPEGGREPDHRSEAGSEQPDEEPGT. The segment covering 627-641 has biased composition (basic and acidic residues); it reads LRPEGGREPDHRSEA.

In the N-terminal section; belongs to the NhaA Na(+)/H(+) (TC 2.A.33) antiporter family.

The protein resides in the cell membrane. The catalysed reaction is Na(+)(in) + 2 H(+)(out) = Na(+)(out) + 2 H(+)(in). Na(+)/H(+) antiporter that extrudes sodium in exchange for external protons. The polypeptide is Na(+)/H(+) antiporter NhaA 3 (Salinispora tropica (strain ATCC BAA-916 / DSM 44818 / JCM 13857 / NBRC 105044 / CNB-440)).